The primary structure comprises 941 residues: Replicative DNA helicase DnaB (941 aa).

The tract at residues Met-1 to Leu-25 is disordered. Residues Arg-214–Gly-484 enclose the SF4 helicase; first part domain. Ala-245–Thr-252 is a binding site for ATP. One can recognise a DOD-type homing endonuclease domain in the interval Leu-534 to Ile-683. Residues Asp-646–Gln-915 enclose the SF4 helicase; second part domain. The tract at residues Tyr-914–Phe-941 is disordered.

It belongs to the helicase family. DnaB subfamily. In terms of assembly, homohexamer. Upon expression in E.coli this protein undergoes self splicing that involves a post-translational excision of the intervening region (intein) followed by peptide ligation.

The catalysed reaction is Couples ATP hydrolysis with the unwinding of duplex DNA at the replication fork by translocating in the 5'-3' direction. This creates two antiparallel DNA single strands (ssDNA). The leading ssDNA polymer is the template for DNA polymerase III holoenzyme which synthesizes a continuous strand.. The enzyme catalyses ATP + H2O = ADP + phosphate + H(+). In terms of biological role, the main replicative DNA helicase, it participates in initiation and elongation during chromosome replication. Travels ahead of the DNA replisome, separating dsDNA into templates for DNA synthesis. A processive ATP-dependent 5'-3' DNA helicase it has DNA-dependent ATPase activity. The intein is an endonuclease. The chain is Replicative DNA helicase DnaB from Rhodothermus marinus (Rhodothermus obamensis).